We begin with the raw amino-acid sequence, 310 residues long: Putative S-adenosyl-L-methionine-dependent methyltransferase Mb0151 (310 aa).

S-adenosyl-L-methionine contacts are provided by residues D132 and 161–162 (DL).

It belongs to the UPF0677 family.

Its function is as follows. Exhibits S-adenosyl-L-methionine-dependent methyltransferase activity. This is Putative S-adenosyl-L-methionine-dependent methyltransferase Mb0151 from Mycobacterium bovis (strain ATCC BAA-935 / AF2122/97).